Here is a 61-residue protein sequence, read N- to C-terminus: Sec-independent protein translocase protein TatA (61 aa).

The helical transmembrane segment at 1–21 (MFGLGITEILLILGIIILIFG) threads the bilayer.

Belongs to the TatA/E family. In terms of assembly, the Tat system comprises two distinct complexes: a TatABC complex, containing multiple copies of TatA, TatB and TatC subunits, and a separate TatA complex, containing only TatA subunits. Substrates initially bind to the TatABC complex, which probably triggers association of the separate TatA complex to form the active translocon.

The protein resides in the cell inner membrane. Functionally, part of the twin-arginine translocation (Tat) system that transports large folded proteins containing a characteristic twin-arginine motif in their signal peptide across membranes. TatA could form the protein-conducting channel of the Tat system. This chain is Sec-independent protein translocase protein TatA, found in Maridesulfovibrio salexigens (strain ATCC 14822 / DSM 2638 / NCIMB 8403 / VKM B-1763) (Desulfovibrio salexigens).